Consider the following 218-residue polypeptide: Tubulin polymerization-promoting protein (218 aa).

The segment at 1–45 is disordered; the sequence is MADSKAKPTKAANKTPPKSPGDPAKAAKRLSLESEGANEGAAAAP. Residues 2-115 form a mediates interaction with LIMK1 region; sequence ADSKAKPTKA…SCRTITFEQF (114 aa). T15 carries the post-translational modification Phosphothreonine. Phosphoserine occurs at positions 19, 31, and 34. Residues 33–45 are compositionally biased toward low complexity; it reads ESEGANEGAAAAP. Zn(2+)-binding residues include H60, H71, C79, and C82. At T91 the chain carries Phosphothreonine. S106 is subject to Phosphoserine. A glycan (O-linked (GlcNAc) serine) is linked at S151. A phosphoserine mark is found at S158 and S159. The tract at residues 165 to 192 is disordered; the sequence is LTDTSKFTGSHKERFDQSGKGKGKAGRV. Basic and acidic residues predominate over residues 174–183; the sequence is SHKERFDQSG.

The protein belongs to the TPPP family. As to quaternary structure, homodimer. Binds tubulin; binding is inhibited by GTP. Interacts with MAPK1. Interacts with GAPDH; the interaction is direct. Interacts with LIMK1 (via the PDZ domain); the interaction is direct. Interacts with LIMK2. Interacts with HDAC6; thereby inhibiting the tubulin deacetylase activity of HDAC6. Interacts with aggregated SNCA; may have a pro-aggregatory role in synucleinopathies. Interacts with DYNLL1. Interacts (via C-terminus) with S100A2, S100A6 and S100B; these interactions inhibit TPPP dimerization. Mg(2+) is required as a cofactor. Phosphorylated by LIMK1 on serine residues; phosphorylation may alter the tubulin polymerization activity. Phosphorylation by LIMK2, but not LIMK1, regulates astral microtubule organization at early stage of mitosis. Phosphorylation by ROCK1 at Ser-31, Ser-106 and Ser-158 inhibits interaction with HDAC6, resulting in decreased acetylation of tubulin, increased cell motility and entry into S-phase. Phosphorylation by CDK1 inhibits the microtubule polymerizing activity. In terms of processing, degraded by the proteasome; zinc-binding inhibits degradation by the proteasome. As to expression, predominantly expressed in mature oligodendrocytes.

It localises to the golgi outpost. The protein localises to the cytoplasm. Its subcellular location is the cytoskeleton. The protein resides in the microtubule organizing center. It is found in the nucleus. It localises to the spindle. The catalysed reaction is GTP + H2O = GDP + phosphate + H(+). Its function is as follows. Regulator of microtubule dynamics that plays a key role in myelination by promoting elongation of the myelin sheath. Acts as a microtubule nucleation factor in oligodendrocytes: specifically localizes to the postsynaptic Golgi apparatus region, also named Golgi outpost, and promotes microtubule nucleation, an important step for elongation of the myelin sheath. Required for both uniform polarized growth of distal microtubules as well as directing the branching of proximal processes. Shows magnesium-dependent GTPase activity; the role of the GTPase activity is unclear. In addition to microtubule nucleation activity, also involved in microtubule bundling and stabilization of existing microtubules, thereby maintaining the integrity of the microtubule network. Regulates microtubule dynamics by promoting tubulin acetylation: acts by inhibiting the tubulin deacetylase activity of HDAC6. Also regulates cell migration: phosphorylation by ROCK1 inhibits interaction with HDAC6, resulting in decreased acetylation of tubulin and increased cell motility. Plays a role in cell proliferation by regulating the G1/S-phase transition. Involved in astral microtubule organization and mitotic spindle orientation during early stage of mitosis; this process is regulated by phosphorylation by LIMK2. This is Tubulin polymerization-promoting protein from Rattus norvegicus (Rat).